Reading from the N-terminus, the 64-residue chain is Large ribosomal subunit protein bL35 (64 aa).

2 stretches are compositionally biased toward basic residues: residues 1-15 (MPKA…KRFR) and 23-33 (VRQKANRRHLL). A disordered region spans residues 1 to 47 (MPKAKTHSGASKRFRTTGSGKIVRQKANRRHLLEHKPTSRTRRLDGR). A compositionally biased stretch (basic and acidic residues) spans 34–46 (EHKPTSRTRRLDG).

The protein belongs to the bacterial ribosomal protein bL35 family.

The chain is Large ribosomal subunit protein bL35 from Mycobacteroides abscessus (strain ATCC 19977 / DSM 44196 / CCUG 20993 / CIP 104536 / JCM 13569 / NCTC 13031 / TMC 1543 / L948) (Mycobacterium abscessus).